The sequence spans 383 residues: DNA-directed RNA polymerase subunit alpha (383 aa).

Residues 1–240 (MEKKTGLIQF…NLFHQISPPL (240 aa)) are alpha N-terminal domain (alpha-NTD). Residues 306–383 (IDKQMNDSVN…RFNMELLPTK (78 aa)) are alpha C-terminal domain (alpha-CTD).

This sequence belongs to the RNA polymerase alpha chain family. As to quaternary structure, in plastids the minimal PEP RNA polymerase catalytic core is composed of four subunits: alpha, beta, beta', and beta''. When a (nuclear-encoded) sigma factor is associated with the core the holoenzyme is formed, which can initiate transcription.

Its subcellular location is the plastid. The protein localises to the chloroplast. The catalysed reaction is RNA(n) + a ribonucleoside 5'-triphosphate = RNA(n+1) + diphosphate. Its function is as follows. DNA-dependent RNA polymerase catalyzes the transcription of DNA into RNA using the four ribonucleoside triphosphates as substrates. This chain is DNA-directed RNA polymerase subunit alpha, found in Staurastrum punctulatum (Green alga).